The following is a 188-amino-acid chain: RWD domain-containing protein 4 (188 aa).

The region spanning 9–111 (MELEALRSIY…EYAKDNKEQF (103 aa)) is the RWD domain. Residues 132-167 (TPSAAPSSKKKDKKEQLSKAQKRKLADKTDHKGELP) form a disordered region. Positions 155–166 (KLADKTDHKGEL) are enriched in basic and acidic residues.

This is RWD domain-containing protein 4 (Rwdd4) from Rattus norvegicus (Rat).